The sequence spans 397 residues: Succinate--CoA ligase [ADP-forming] subunit beta (397 aa).

Positions 9–254 constitute an ATP-grasp domain; it reads KALLAQYGAP…ETEEDPKELA (246 aa). ATP contacts are provided by residues Lys-46, 53–55, Glu-109, Ser-112, and Glu-117; that span reads GRG. The Mg(2+) site is built by Asn-209 and Asp-223. Substrate-binding positions include Asn-274 and 331–333; that span reads GIM.

This sequence belongs to the succinate/malate CoA ligase beta subunit family. As to quaternary structure, heterotetramer of two alpha and two beta subunits. It depends on Mg(2+) as a cofactor.

The catalysed reaction is succinate + ATP + CoA = succinyl-CoA + ADP + phosphate. It catalyses the reaction GTP + succinate + CoA = succinyl-CoA + GDP + phosphate. The protein operates within carbohydrate metabolism; tricarboxylic acid cycle; succinate from succinyl-CoA (ligase route): step 1/1. Succinyl-CoA synthetase functions in the citric acid cycle (TCA), coupling the hydrolysis of succinyl-CoA to the synthesis of either ATP or GTP and thus represents the only step of substrate-level phosphorylation in the TCA. The beta subunit provides nucleotide specificity of the enzyme and binds the substrate succinate, while the binding sites for coenzyme A and phosphate are found in the alpha subunit. The polypeptide is Succinate--CoA ligase [ADP-forming] subunit beta (Jannaschia sp. (strain CCS1)).